Reading from the N-terminus, the 489-residue chain is Cytochrome P450 2C70 (489 aa).

A signal peptide spans 1–27 (MALFIFLGIWLSCLVFLFLWNQHHVRR). Cysteine 434 provides a ligand contact to heme.

Belongs to the cytochrome P450 family. Requires heme as cofactor.

Its subcellular location is the endoplasmic reticulum membrane. The protein localises to the microsome membrane. The catalysed reaction is chenodeoxycholate + reduced [NADPH--hemoprotein reductase] + O2 = alpha-muricholate + oxidized [NADPH--hemoprotein reductase] + H2O + H(+). It carries out the reaction ursodeoxycholate + reduced [NADPH--hemoprotein reductase] + O2 = beta-muricholate + oxidized [NADPH--hemoprotein reductase] + H2O + H(+). In terms of biological role, a cytochrome P450 monooxygenase involved in muricholic acid (MCA) synthesis. Hydroxylates at the 6-beta position two major bile acids, chenodeoxycholic acid (CDCA) and ursodeoxycholic acid (UDCA) to form alpha-MCA and beta-MCA, respectively. May regulate NR1H4/farnesoid X receptor signaling, as taurine-conjugated MCAs are antagonists of NR1H4. Mechanistically, uses molecular oxygen inserting one oxygen atom into a substrate, and reducing the second into a water molecule, with two electrons provided by NADPH via cytochrome P450 reductase (CPR; NADPH-ferrihemoprotein reductase). This is Cytochrome P450 2C70 from Rattus norvegicus (Rat).